Consider the following 78-residue polypeptide: uncharacterized protein (78 aa).

2 consecutive transmembrane segments (helical) span residues 20–40 (SVYF…WLVV) and 57–77 (LLMD…ILIA).

The protein resides in the cell membrane. This is an uncharacterized protein from Escherichia coli (strain K12).